A 688-amino-acid polypeptide reads, in one-letter code: MSKIRVHEYAKKNNISSKDLMTKLKEMNIEVSNHMTMLEDEVVNKLDNQYSAGAEKPSVADEFEVEEKVVRSKKNSNKNKKKGKANEDKRQDNFAGRQQTPIVETPDKITFSGSLTVGDLAKKLSKEPSEIIKKLFMLGIMATINQDLDKDTIELIATDYGIEVEEEVVVSETEFETFIDEQDDEENLKERPAVVTIMGHVDHGKTTLLDSIRNSKVTAGEAGGITQHIGAYQVDVNDKKITFLDTPGHAVFTTMRARGAQVTDITILVVAADDGVMPQTVEAISHAKAAGVPIIVAVNKMDKPAANPDRVMQELTEYELVPEAWGGDTIFVPISAIQGEGIDNLLEMILLVSEVEEYKANPNRYAAGTVIEAQLDKGKGTIATLLVQNGTLRVGDPIVVGTSFGRVRAMVSDIGRRVKVAGPSTPVEITGLNEVPQAGDRFMAFADEKKARQIGESRAQEALVAQRGEKSKFSLEDLFQQIQEGDVKEINLIVKADVQGSVEAMAASLRKIDVEGVKVKIIHTGVGAITESDIILASASNAIVIGFNVRPDVNAKRTAELEKVDVRLHRIIYKVIEEIESAMQGMLDPEFEEKVIGQAEVRQTFKVTKVGTIAGCYVIDGKITRDSGVRIIRDGVVVFEGKLDTLKRFKDDVKEVAQNYECGITIERYNDLKEGDIIEAYVMEEVKR.

The segment at 53-101 (GAEKPSVADEFEVEEKVVRSKKNSNKNKKKGKANEDKRQDNFAGRQQTP) is disordered. Positions 71–83 (RSKKNSNKNKKKG) are enriched in basic residues. The region spanning 190–359 (ERPAVVTIMG…LLVSEVEEYK (170 aa)) is the tr-type G domain. The G1 stretch occupies residues 199-206 (GHVDHGKT). Residue 199–206 (GHVDHGKT) participates in GTP binding. Residues 224–228 (GITQH) form a G2 region. Residues 245–248 (DTPG) are G3. GTP-binding positions include 245–249 (DTPGH) and 299–302 (NKMD). Positions 299–302 (NKMD) are G4. A G5 region spans residues 335–337 (SAI).

Belongs to the TRAFAC class translation factor GTPase superfamily. Classic translation factor GTPase family. IF-2 subfamily.

It localises to the cytoplasm. Functionally, one of the essential components for the initiation of protein synthesis. Protects formylmethionyl-tRNA from spontaneous hydrolysis and promotes its binding to the 30S ribosomal subunits. Also involved in the hydrolysis of GTP during the formation of the 70S ribosomal complex. The chain is Translation initiation factor IF-2 from Bacillus mycoides (strain KBAB4) (Bacillus weihenstephanensis).